The following is a 287-amino-acid chain: ATP synthase gamma chain (287 aa).

The protein belongs to the ATPase gamma chain family. F-type ATPases have 2 components, CF(1) - the catalytic core - and CF(0) - the membrane proton channel. CF(1) has five subunits: alpha(3), beta(3), gamma(1), delta(1), epsilon(1). CF(0) has three main subunits: a, b and c.

It localises to the cell inner membrane. In terms of biological role, produces ATP from ADP in the presence of a proton gradient across the membrane. The gamma chain is believed to be important in regulating ATPase activity and the flow of protons through the CF(0) complex. The protein is ATP synthase gamma chain of Salmonella paratyphi A (strain ATCC 9150 / SARB42).